The following is a 251-amino-acid chain: ATP synthase subunit a (251 aa).

Transmembrane regions (helical) follow at residues 28-48, 63-80, 86-106, 115-135, 154-176, 195-215, and 219-239; these read FTQS…IIAL, LVEI…EQIG, FFPF…LGLF, HVAV…AVAL, ALAP…SLSI, FMFL…LLPM, and VTLV…FAIL.

It belongs to the ATPase A chain family. As to quaternary structure, F-type ATPases have 2 components, CF(1) - the catalytic core - and CF(0) - the membrane proton channel. CF(1) has five subunits: alpha(3), beta(3), gamma(1), delta(1), epsilon(1). CF(0) has three main subunits: a(1), b(2) and c(9-12). The alpha and beta chains form an alternating ring which encloses part of the gamma chain. CF(1) is attached to CF(0) by a central stalk formed by the gamma and epsilon chains, while a peripheral stalk is formed by the delta and b chains.

Its subcellular location is the cell inner membrane. Its function is as follows. Key component of the proton channel; it plays a direct role in the translocation of protons across the membrane. In Granulibacter bethesdensis (strain ATCC BAA-1260 / CGDNIH1), this protein is ATP synthase subunit a.